A 272-amino-acid chain; its full sequence is R-spondin-3 (272 aa).

An N-terminal signal peptide occupies residues 1–21 (MHLRLISWLFIILNFMEYIGS). FU repeat units follow at residues 35-86 (PNVS…GYYG) and 92-135 (INKC…GLEA). N-linked (GlcNAc...) asparagine glycosylation occurs at asparagine 36. Disulfide bonds link cysteine 41-cysteine 48, cysteine 45-cysteine 54, cysteine 57-cysteine 76, cysteine 80-cysteine 95, cysteine 98-cysteine 105, cysteine 102-cysteine 111, cysteine 114-cysteine 125, cysteine 129-cysteine 142, cysteine 148-cysteine 190, cysteine 159-cysteine 166, and cysteine 199-cysteine 206. The TSP type-1 domain occupies 147-207 (HCEVSEWNPW…KCTVQRKKCQ (61 aa)). The tract at residues 201 to 272 (VQRKKCQKGE…QKSVSVSTVH (72 aa)) is disordered. The segment covering 213–223 (KKGRERKRKKP) has biased composition (basic residues). Positions 224–252 (NKGESKEAIPDSKSLESSKEIPEQRENKQ) are enriched in basic and acidic residues.

It belongs to the R-spondin family. In terms of assembly, interacts with the extracellular domain of FZD8 and LRP6. It however does not form a ternary complex with FZD8 and LRP6. Interacts with WNT1. Binds heparin. Interacts with LGR4, LGR5 and LGR6. In terms of tissue distribution, ubiquitously expressed. Expressed at higher level in placenta, small intestine, fetal thymus and lymph node. Highly expressed in endothelial cells.

Its subcellular location is the secreted. Functionally, activator of the canonical Wnt signaling pathway by acting as a ligand for LGR4-6 receptors, which acts as a key regulator of angiogenesis. Upon binding to LGR4-6 (LGR4, LGR5 or LGR6), LGR4-6 associate with phosphorylated LRP6 and frizzled receptors that are activated by extracellular Wnt receptors, triggering the canonical Wnt signaling pathway to increase expression of target genes. Also regulates the canonical Wnt/beta-catenin-dependent pathway and non-canonical Wnt signaling by acting as an inhibitor of ZNRF3, an important regulator of the Wnt signaling pathway. Acts as a ligand for frizzled FZD8 and LRP6. May negatively regulate the TGF-beta pathway. Acts as a key regulator of angiogenesis by controlling vascular stability and pruning: acts by activating the non-canonical Wnt signaling pathway in endothelial cells. Can also amplify Wnt signaling pathway independently of LGR4-6 receptors, possibly by acting as a direct antagonistic ligand to RNF43 and ZNRF3. The protein is R-spondin-3 (RSPO3) of Homo sapiens (Human).